We begin with the raw amino-acid sequence, 151 residues long: Arginine repressor (151 aa).

This sequence belongs to the ArgR family.

It is found in the cytoplasm. The protein operates within amino-acid biosynthesis; L-arginine biosynthesis [regulation]. Functionally, regulates arginine biosynthesis genes. The sequence is that of Arginine repressor from Lachnospira eligens (strain ATCC 27750 / DSM 3376 / VPI C15-48 / C15-B4) (Eubacterium eligens).